We begin with the raw amino-acid sequence, 279 residues long: DegV domain-containing protein SP_1112 (279 aa).

The region spanning 4 to 277 is the DegV domain; that stretch reads IKIVTDSSVT…ENAWAILIRY (274 aa). Hexadecanoate contacts are provided by threonine 62 and serine 94.

In terms of biological role, may bind long-chain fatty acids, such as palmitate, and may play a role in lipid transport or fatty acid metabolism. The chain is DegV domain-containing protein SP_1112 from Streptococcus pneumoniae serotype 4 (strain ATCC BAA-334 / TIGR4).